We begin with the raw amino-acid sequence, 219 residues long: NAD(P)H-quinone oxidoreductase subunit I (219 aa).

2 consecutive 4Fe-4S ferredoxin-type domains span residues 55-84 (GRIH…VDWV) and 95-124 (RNYS…MTEE). The [4Fe-4S] cluster site is built by C64, C67, C70, C74, C104, C107, C110, and C114.

Belongs to the complex I 23 kDa subunit family. In terms of assembly, NDH-1 is composed of at least 11 different subunits. [4Fe-4S] cluster serves as cofactor.

The protein resides in the cellular thylakoid membrane. The enzyme catalyses a plastoquinone + NADH + (n+1) H(+)(in) = a plastoquinol + NAD(+) + n H(+)(out). The catalysed reaction is a plastoquinone + NADPH + (n+1) H(+)(in) = a plastoquinol + NADP(+) + n H(+)(out). Its function is as follows. NDH-1 shuttles electrons from an unknown electron donor, via FMN and iron-sulfur (Fe-S) centers, to quinones in the respiratory and/or the photosynthetic chain. The immediate electron acceptor for the enzyme in this species is believed to be plastoquinone. Couples the redox reaction to proton translocation, and thus conserves the redox energy in a proton gradient. This chain is NAD(P)H-quinone oxidoreductase subunit I, found in Prochlorococcus marinus (strain SARG / CCMP1375 / SS120).